A 383-amino-acid chain; its full sequence is Protein delta homolog 2 (383 aa).

An N-terminal signal peptide occupies residues Met-1–Ala-26. EGF-like domains follow at residues Asp-27–Glu-58, Arg-62–Asp-89, Asp-91–Glu-129, and Lys-131–Glu-172. At Asp-27–Ser-306 the chain is on the extracellular side. 17 disulfides stabilise this stretch: Cys-29/Cys-40, Cys-33/Cys-46, Cys-48/Cys-57, Cys-66/Cys-71, Cys-79/Cys-88, Cys-95/Cys-107, Cys-101/Cys-117, Cys-119/Cys-128, Cys-135/Cys-148, Cys-142/Cys-160, Cys-162/Cys-171, Cys-178/Cys-189, Cys-183/Cys-198, Cys-200/Cys-209, Cys-216/Cys-227, Cys-221/Cys-236, and Cys-238/Cys-247. Asn-157 is a glycosylation site (N-linked (GlcNAc...) asparagine). Positions Asn-174–Thr-210 constitute an EGF-like 5; calcium-binding domain. Residues Asn-212–Glu-248 enclose the EGF-like 6; calcium-binding domain. A helical membrane pass occupies residues Leu-307–Leu-327. The Cytoplasmic portion of the chain corresponds to Thr-328–Leu-383.

Its subcellular location is the membrane. In terms of biological role, regulates adipogenesis. This is Protein delta homolog 2 (DLK2) from Homo sapiens (Human).